A 100-amino-acid polypeptide reads, in one-letter code: Putative insulin-like peptide beta-type 6 (100 aa).

Positions Met1–Ala18 are cleaved as a signal peptide. 4 disulfide bridges follow: Cys54/Cys83, Cys66/Cys96, Cys70/Cys97, and Cys82/Cys87.

The protein belongs to the insulin family.

Its subcellular location is the secreted. The protein is Putative insulin-like peptide beta-type 6 (ins-5) of Caenorhabditis elegans.